Reading from the N-terminus, the 358-residue chain is Peptide chain release factor 1 (358 aa).

Glutamine 235 is subject to N5-methylglutamine. The disordered stretch occupies residues 284 to 309 (KVESERSASRKSQVGSGDRSERIRTY).

It belongs to the prokaryotic/mitochondrial release factor family. Post-translationally, methylated by PrmC. Methylation increases the termination efficiency of RF1.

Its subcellular location is the cytoplasm. In terms of biological role, peptide chain release factor 1 directs the termination of translation in response to the peptide chain termination codons UAG and UAA. This chain is Peptide chain release factor 1, found in Bartonella tribocorum (strain CIP 105476 / IBS 506).